The following is a 415-amino-acid chain: Ribulose bisphosphate carboxylase large chain (415 aa).

Asparagine 101 and threonine 151 together coordinate substrate. The active-site Proton acceptor is lysine 153. Residue lysine 155 coordinates substrate. Mg(2+) contacts are provided by lysine 179, aspartate 181, and glutamate 182. Residue lysine 179 is modified to N6-carboxylysine. The Proton acceptor role is filled by histidine 272. Substrate-binding residues include arginine 273, histidine 305, and serine 357.

Belongs to the RuBisCO large chain family. Type I subfamily. In terms of assembly, heterohexadecamer of 8 large chains and 8 small chains; disulfide-linked. The disulfide link is formed within the large subunit homodimers. It depends on Mg(2+) as a cofactor. Post-translationally, the disulfide bond which can form in the large chain dimeric partners within the hexadecamer appears to be associated with oxidative stress and protein turnover.

Its subcellular location is the plastid. The protein localises to the chloroplast. It carries out the reaction 2 (2R)-3-phosphoglycerate + 2 H(+) = D-ribulose 1,5-bisphosphate + CO2 + H2O. It catalyses the reaction D-ribulose 1,5-bisphosphate + O2 = 2-phosphoglycolate + (2R)-3-phosphoglycerate + 2 H(+). In terms of biological role, ruBisCO catalyzes two reactions: the carboxylation of D-ribulose 1,5-bisphosphate, the primary event in carbon dioxide fixation, as well as the oxidative fragmentation of the pentose substrate in the photorespiration process. Both reactions occur simultaneously and in competition at the same active site. This chain is Ribulose bisphosphate carboxylase large chain, found in Cibotium barometz (Scythian lamb).